The following is a 556-amino-acid chain: 2-succinyl-5-enolpyruvyl-6-hydroxy-3-cyclohexene-1-carboxylate synthase (556 aa).

The protein belongs to the TPP enzyme family. MenD subfamily. As to quaternary structure, homodimer. It depends on Mg(2+) as a cofactor. Requires Mn(2+) as cofactor. Thiamine diphosphate is required as a cofactor.

It catalyses the reaction isochorismate + 2-oxoglutarate + H(+) = 5-enolpyruvoyl-6-hydroxy-2-succinyl-cyclohex-3-ene-1-carboxylate + CO2. Its pathway is quinol/quinone metabolism; 1,4-dihydroxy-2-naphthoate biosynthesis; 1,4-dihydroxy-2-naphthoate from chorismate: step 2/7. The protein operates within quinol/quinone metabolism; menaquinone biosynthesis. Catalyzes the thiamine diphosphate-dependent decarboxylation of 2-oxoglutarate and the subsequent addition of the resulting succinic semialdehyde-thiamine pyrophosphate anion to isochorismate to yield 2-succinyl-5-enolpyruvyl-6-hydroxy-3-cyclohexene-1-carboxylate (SEPHCHC). This Salmonella paratyphi C (strain RKS4594) protein is 2-succinyl-5-enolpyruvyl-6-hydroxy-3-cyclohexene-1-carboxylate synthase.